Reading from the N-terminus, the 123-residue chain is Large ribosomal subunit protein uL24 (123 aa).

Belongs to the universal ribosomal protein uL24 family. Part of the 50S ribosomal subunit.

In terms of biological role, one of two assembly initiator proteins, it binds directly to the 5'-end of the 23S rRNA, where it nucleates assembly of the 50S subunit. Its function is as follows. Located at the polypeptide exit tunnel on the outside of the subunit. This chain is Large ribosomal subunit protein uL24, found in Pyrobaculum aerophilum (strain ATCC 51768 / DSM 7523 / JCM 9630 / CIP 104966 / NBRC 100827 / IM2).